The primary structure comprises 370 residues: MIERRKTRAVKVGRVQIGGGAPITVQSMTKCDTRDVPEVLRQIRALEEAGCDIVRVAAPTMEAAECFKEIRKGCNIPLVADVHFDYRIALKVLEAGIDKLRINPGNIGARWKVEEVVRACKDRGVPIRIGVNAGSLEEEFLEKYGYPTADGMVESALKHVAILEELDFHDIVISIKSSRVDQMIEAYRKLSEKVDYPLHVGVTEAGTPFAGTIKSAVGIGTILAEGIGDTIRVSLSTDCVEEVRVGYEILKALGLRTRGINIISCPSCGRVQIDLVKVANEVERRLQHIDVPLNVAVMGCVVNGPGEAAEADVALFGGKGVGMLYVGGERVRKTTEEEMVEALVELVEQKAAEIKASGRVPTGYGRHEER.

Residues Cys-265, Cys-268, Cys-300, and Glu-307 each coordinate [4Fe-4S] cluster.

The protein belongs to the IspG family. [4Fe-4S] cluster serves as cofactor.

The enzyme catalyses (2E)-4-hydroxy-3-methylbut-2-enyl diphosphate + oxidized [flavodoxin] + H2O + 2 H(+) = 2-C-methyl-D-erythritol 2,4-cyclic diphosphate + reduced [flavodoxin]. Its pathway is isoprenoid biosynthesis; isopentenyl diphosphate biosynthesis via DXP pathway; isopentenyl diphosphate from 1-deoxy-D-xylulose 5-phosphate: step 5/6. Its function is as follows. Converts 2C-methyl-D-erythritol 2,4-cyclodiphosphate (ME-2,4cPP) into 1-hydroxy-2-methyl-2-(E)-butenyl 4-diphosphate. This is 4-hydroxy-3-methylbut-2-en-1-yl diphosphate synthase (flavodoxin) from Symbiobacterium thermophilum (strain DSM 24528 / JCM 14929 / IAM 14863 / T).